A 72-amino-acid chain; its full sequence is MAKSDVIEMEGVIVDTLPNTMFRVELSNGHVVTAHISGKMRKNYIRILTGDKVKVELTPYDLSKGRIVYRAR.

The 72-residue stretch at 1-72 folds into the S1-like domain; that stretch reads MAKSDVIEME…SKGRIVYRAR (72 aa).

It belongs to the IF-1 family. Component of the 30S ribosomal translation pre-initiation complex which assembles on the 30S ribosome in the order IF-2 and IF-3, IF-1 and N-formylmethionyl-tRNA(fMet); mRNA recruitment can occur at any time during PIC assembly.

Its subcellular location is the cytoplasm. One of the essential components for the initiation of protein synthesis. Stabilizes the binding of IF-2 and IF-3 on the 30S subunit to which N-formylmethionyl-tRNA(fMet) subsequently binds. Helps modulate mRNA selection, yielding the 30S pre-initiation complex (PIC). Upon addition of the 50S ribosomal subunit IF-1, IF-2 and IF-3 are released leaving the mature 70S translation initiation complex. The protein is Translation initiation factor IF-1 of Marinobacter nauticus (strain ATCC 700491 / DSM 11845 / VT8) (Marinobacter aquaeolei).